The chain runs to 445 residues: Argininosuccinate synthase (445 aa).

ATP-binding positions include Ala17–Ser25 and Ala43. Residue Tyr99 participates in L-citrulline binding. Residues Gly129 and Thr131 each contribute to the ATP site. Residues Thr131, Asn135, and Asp136 each contribute to the L-aspartate site. Asn135 contacts L-citrulline. Asp136 provides a ligand contact to ATP. The L-citrulline site is built by Arg139 and Ser192. An ATP-binding site is contributed by Asp194. Positions 201, 203, and 280 each coordinate L-citrulline.

It belongs to the argininosuccinate synthase family. Type 2 subfamily. In terms of assembly, homotetramer.

It localises to the cytoplasm. It carries out the reaction L-citrulline + L-aspartate + ATP = 2-(N(omega)-L-arginino)succinate + AMP + diphosphate + H(+). It functions in the pathway amino-acid biosynthesis; L-arginine biosynthesis; L-arginine from L-ornithine and carbamoyl phosphate: step 2/3. The sequence is that of Argininosuccinate synthase from Bordetella bronchiseptica (strain ATCC BAA-588 / NCTC 13252 / RB50) (Alcaligenes bronchisepticus).